The sequence spans 211 residues: Probable nicotinate-nucleotide adenylyltransferase (211 aa).

This sequence belongs to the NadD family.

It catalyses the reaction nicotinate beta-D-ribonucleotide + ATP + H(+) = deamido-NAD(+) + diphosphate. Its pathway is cofactor biosynthesis; NAD(+) biosynthesis; deamido-NAD(+) from nicotinate D-ribonucleotide: step 1/1. Functionally, catalyzes the reversible adenylation of nicotinate mononucleotide (NaMN) to nicotinic acid adenine dinucleotide (NaAD). This is Probable nicotinate-nucleotide adenylyltransferase from Shewanella frigidimarina (strain NCIMB 400).